We begin with the raw amino-acid sequence, 269 residues long: Iron(3+)-hydroxamate import ATP-binding protein FhuC (269 aa).

In terms of domain architecture, ABC transporter spans 4–240 (LSTEQLGIGY…DILKQVFQID (237 aa)). ATP-binding positions include 36-43 (GPNGCGKS) and 160-171 (LLLLDEPTTYLD).

This sequence belongs to the ABC transporter superfamily. Iron (Fe3+)-hydroxamate importer (TC 3.A.1.14.7) family. In terms of assembly, the complex is composed of an ATP-binding protein (FhuC), two transmembrane proteins (FhuB and FhuG) and a solute-binding protein (FhuD or YxeB).

The protein resides in the cell membrane. The catalysed reaction is ATP + H2O + Fe(3+)-hydroxamate complex-[hydroxamate-binding protein]Side 1 = ADP + phosphate + Fe(3+)-hydroxamate complexSide 2 + [hydroxamate-binding protein]Side 1.. Its function is as follows. Part of the ABC transporter complex FhuBGCD involved in iron(3+)-hydroxamate import. Responsible for energy coupling to the transport system. The chain is Iron(3+)-hydroxamate import ATP-binding protein FhuC (fhuC) from Bacillus subtilis (strain 168).